The chain runs to 510 residues: Xylose import ATP-binding protein XylG (510 aa).

ABC transporter domains follow at residues 5–242 (LEMK…VGRE) and 259–505 (LRVE…LRSE). 37 to 44 (GENGSGKS) contributes to the ATP binding site.

It belongs to the ABC transporter superfamily. Xylose importer (TC 3.A.1.2.4) family. In terms of assembly, the complex is composed of two ATP-binding proteins (XylG), two transmembrane proteins (XylH) and a solute-binding protein (XylF).

It localises to the cell inner membrane. It catalyses the reaction D-xylose(out) + ATP + H2O = D-xylose(in) + ADP + phosphate + H(+). In terms of biological role, part of the ABC transporter complex XylFGH involved in xylose import. Responsible for energy coupling to the transport system. This is Xylose import ATP-binding protein XylG from Yersinia pestis.